Consider the following 143-residue polypeptide: Nucleoside diphosphate kinase (143 aa).

ATP contacts are provided by K11, F59, R87, T93, R104, and N114. H117 functions as the Pros-phosphohistidine intermediate in the catalytic mechanism.

Belongs to the NDK family. As to quaternary structure, homotetramer. Requires Mg(2+) as cofactor.

Its subcellular location is the cytoplasm. It carries out the reaction dZDP + ATP = dZTP + ADP. The enzyme catalyses a 2'-deoxyribonucleoside 5'-diphosphate + ATP = a 2'-deoxyribonucleoside 5'-triphosphate + ADP. The catalysed reaction is a ribonucleoside 5'-diphosphate + ATP = a ribonucleoside 5'-triphosphate + ADP. It participates in purine metabolism. Its function is as follows. Major role in the synthesis of nucleoside triphosphates other than ATP. The ATP gamma phosphate is transferred to the NDP beta phosphate via a ping-pong mechanism, using a phosphorylated active-site intermediate. (Microbial infection) Catalyzes the phosphorylation of dZDP to dZTP, when the bacterium is infected by a phage that produces the substrate for the synthesis of dZTP (2- amino-2'-deoxyadenosine 5'-triphosphate), which is then used by the phage as a DNA polymerase substrate. In Acinetobacter baumannii (strain AB307-0294), this protein is Nucleoside diphosphate kinase.